A 219-amino-acid chain; its full sequence is Uracil phosphoribosyltransferase 1 (219 aa).

Residues arginine 33, arginine 42, and 76 to 79 (DGRI) contribute to the GTP site. Arginine 86 provides a ligand contact to 5-phospho-alpha-D-ribose 1-diphosphate. A GTP-binding site is contributed by arginine 103. Arginine 111 is a 5-phospho-alpha-D-ribose 1-diphosphate binding site. Arginine 132 lines the GTP pocket. 5-phospho-alpha-D-ribose 1-diphosphate is bound by residues aspartate 138 and 138-146 (DPMLATGGS). Tyrosine 202 serves as a coordination point for D-ribose 5-phosphate. Uracil is bound by residues isoleucine 203 and 208 to 210 (GDF). Position 209 (aspartate 209) interacts with 5-phospho-alpha-D-ribose 1-diphosphate.

It belongs to the UPRTase family. Mg(2+) is required as a cofactor.

The enzyme catalyses UMP + diphosphate = 5-phospho-alpha-D-ribose 1-diphosphate + uracil. The protein operates within pyrimidine metabolism; UMP biosynthesis via salvage pathway; UMP from uracil: step 1/1. Its activity is regulated as follows. Allosterically activated by GTP. Functionally, catalyzes the conversion of uracil and 5-phospho-alpha-D-ribose 1-diphosphate (PRPP) to UMP and diphosphate. The polypeptide is Uracil phosphoribosyltransferase 1 (Schizosaccharomyces pombe (strain 972 / ATCC 24843) (Fission yeast)).